Reading from the N-terminus, the 134-residue chain is Syncollin (134 aa).

The signal sequence occupies residues 1–21 (MSPLRPLLLALALASVPCAQG).

As to quaternary structure, monomer and homooligomer; most probably hexameric. Interacts with GP2. In terms of processing, contains intrachain disulfide bonds.

It is found in the zymogen granule membrane. The protein localises to the zymogen granule lumen. Functionally, functions in exocytosis in pancreatic acinar cells regulating the fusion of zymogen granules with each other. May have a pore-forming activity on membranes and regulate exocytosis in other exocrine tissues. This is Syncollin (SYCN) from Homo sapiens (Human).